Reading from the N-terminus, the 101-residue chain is uncharacterized protein (101 aa).

This is an uncharacterized protein from Escherichia coli O157:H7.